The following is a 717-amino-acid chain: Radial spoke head protein 6 homolog A (717 aa).

4 disordered regions span residues 1 to 65 (MGDL…SLSQ), 503 to 523 (SEEE…YEEN), 563 to 588 (TEEE…QEVG), and 672 to 717 (GPEI…ETDD). 3 stretches are compositionally biased toward acidic residues: residues 503 to 513 (SEEEGDEEEEG), 564 to 585 (EEEE…EVEQ), and 700 to 717 (TEEE…ETDD).

Belongs to the flagellar radial spoke RSP4/6 family. In terms of assembly, component of the axonemal radial spoke 1 (RS1) and 2 (RS2) complexes, at least composed of spoke head proteins RSPH1, RSPH3, RSPH9 and the cilia-specific component RSPH4A or sperm-specific component RSPH6A, spoke stalk proteins RSPH14, DNAJB13, DYDC1, ROPN1L and NME5, and the RS1 complex-specific anchor protein IQUB. Interacts with RSPH1. Interacts with RSPH3B. Interacts with RSPH4A. Interacts with RSPH9. Interacts with RSPH10B. In terms of processing, phosphorylated by PKA. Phosphorylation increases in capacitated sperm.

It localises to the cytoplasm. Its subcellular location is the cytoskeleton. The protein localises to the flagellum axoneme. In terms of biological role, functions as part of radial spoke complexes in the axoneme of sperm flagella that play an important part in motility. The triple radial spokes (RS1, RS2 and RS3) are required to modulate beating of the sperm flagellum. The polypeptide is Radial spoke head protein 6 homolog A (Homo sapiens (Human)).